The sequence spans 683 residues: Methionine--tRNA ligase (683 aa).

Positions 14 to 24 (PYANGSIHLGH) match the 'HIGH' region motif. Zn(2+) is bound by residues cysteine 145, cysteine 148, cysteine 158, and cysteine 161. The 'KMSKS' region motif lies at 331 to 335 (KMSKS). An ATP-binding site is contributed by lysine 334. A disordered region spans residues 545–572 (ASKEDLTASQTDTGAAAPAGNGELAKDP). The tRNA-binding domain maps to 581-683 (TFAAVDLRVA…SGAKPGQRIK (103 aa)).

It belongs to the class-I aminoacyl-tRNA synthetase family. MetG type 1 subfamily. As to quaternary structure, homodimer. Zn(2+) serves as cofactor.

Its subcellular location is the cytoplasm. It carries out the reaction tRNA(Met) + L-methionine + ATP = L-methionyl-tRNA(Met) + AMP + diphosphate. Is required not only for elongation of protein synthesis but also for the initiation of all mRNA translation through initiator tRNA(fMet) aminoacylation. The protein is Methionine--tRNA ligase of Pseudomonas fluorescens (strain Pf0-1).